The sequence spans 366 residues: tRNA-queuosine alpha-mannosyltransferase (366 aa).

This sequence belongs to the glycosyltransferase group 1 family. Glycosyltransferase 4 subfamily.

Its subcellular location is the cytoplasm. It is found in the nucleus. The catalysed reaction is queuosine(34) in tRNA(Asp) + GDP-alpha-D-mannose = O-4''-alpha-D-mannosylqueuosine(34) in tRNA(Asp) + GDP + H(+). Its function is as follows. Glycosyltransferase that specifically catalyzes mannosylation of cytoplasmic tRNA(Asp) modified with queuosine at position 34 (queuosine(34)). Mannosylates the cyclopentene moiety of queuosine(34) in tRNA(Asp) to form mannosyl-queuosine(34). Mannosylation of queuosine(34) in tRNA(Asp) is required to slow-down elongation at cognate codons, GAC and GAU, thereby regulating protein translation. The sequence is that of tRNA-queuosine alpha-mannosyltransferase (GTDC1) from Bos taurus (Bovine).